The sequence spans 982 residues: Presequence protease, mitochondrial (982 aa).

The N-terminal 7 residues, Met-1 to Tyr-7, are a transit peptide targeting the mitochondrion. His-84 contributes to the Zn(2+) binding site. The active-site Proton acceptor is the Glu-87. His-88 contributes to the Zn(2+) binding site. Glu-160 is a catalytic residue. Zn(2+) is bound at residue Glu-185.

This sequence belongs to the peptidase M16 family. PreP subfamily. As to quaternary structure, monomer and homodimer; homodimerization is induced by binding of the substrate. The cofactor is Zn(2+).

It localises to the mitochondrion intermembrane space. It is found in the mitochondrion matrix. Functionally, degrades mitochondrial transit peptides after their cleavage in the intermembrane space or in the matrix, and presequence peptides; clearance of these peptides is required to keep the presequence processing machinery running. Preferentially cleaves the N-terminal side of paired basic amino acid residues. Also degrades other unstructured peptides. May function as an ATP-dependent peptidase as opposed to a metalloendopeptidase. The polypeptide is Presequence protease, mitochondrial (CYM1) (Kluyveromyces lactis (strain ATCC 8585 / CBS 2359 / DSM 70799 / NBRC 1267 / NRRL Y-1140 / WM37) (Yeast)).